Reading from the N-terminus, the 560-residue chain is Dihydroxy-acid dehydratase (560 aa).

Mg(2+) is bound at residue Asp80. Cys121 is a [2Fe-2S] cluster binding site. Mg(2+)-binding residues include Asp122 and Lys123. Lys123 is modified (N6-carboxylysine). Cys194 is a [2Fe-2S] cluster binding site. A Mg(2+)-binding site is contributed by Glu447. Ser473 functions as the Proton acceptor in the catalytic mechanism.

This sequence belongs to the IlvD/Edd family. In terms of assembly, homodimer. The cofactor is [2Fe-2S] cluster. Mg(2+) serves as cofactor.

It carries out the reaction (2R)-2,3-dihydroxy-3-methylbutanoate = 3-methyl-2-oxobutanoate + H2O. It catalyses the reaction (2R,3R)-2,3-dihydroxy-3-methylpentanoate = (S)-3-methyl-2-oxopentanoate + H2O. It participates in amino-acid biosynthesis; L-isoleucine biosynthesis; L-isoleucine from 2-oxobutanoate: step 3/4. It functions in the pathway amino-acid biosynthesis; L-valine biosynthesis; L-valine from pyruvate: step 3/4. Functionally, functions in the biosynthesis of branched-chain amino acids. Catalyzes the dehydration of (2R,3R)-2,3-dihydroxy-3-methylpentanoate (2,3-dihydroxy-3-methylvalerate) into 2-oxo-3-methylpentanoate (2-oxo-3-methylvalerate) and of (2R)-2,3-dihydroxy-3-methylbutanoate (2,3-dihydroxyisovalerate) into 2-oxo-3-methylbutanoate (2-oxoisovalerate), the penultimate precursor to L-isoleucine and L-valine, respectively. The polypeptide is Dihydroxy-acid dehydratase (Chlorobaculum parvum (strain DSM 263 / NCIMB 8327) (Chlorobium vibrioforme subsp. thiosulfatophilum)).